Here is a 360-residue protein sequence, read N- to C-terminus: Nucleoporin SEH1-A (360 aa).

WD repeat units follow at residues 10–49 (DHKDLIHDVSFDFHGRRMATCSSDQSVKVWDKSENGNWHC), 55–96 (THSG…SNDK), 111–152 (DSRT…NLSQ), 160–210 (SCKL…RKYA), 217–258 (SVSD…KELS), and 276–315 (NHNSQVWRVSWNITGTVLASSGDDGTVRLWKANYMDNWKC).

Belongs to the WD repeat SEC13 family. As to quaternary structure, component of the Nup107-160 subcomplex of the nuclear pore complex (NPC). The Nup107-160 subcomplex includes NUP160, NUP133, NUP107, NUP98, NUP85, NUP43, NUP37, SEH1 and SEC13. Component of the GATOR2 subcomplex, composed of MIOS, SEC13, SEH1L, WDR24 and WDR59. The GATOR2 complex interacts with CASTOR1 and CASTOR2; the interaction is negatively regulated by arginine. The GATOR2 complex interacts with SESN1, SESN2 and SESN3; the interaction is negatively regulated by amino acids.

The protein resides in the chromosome. Its subcellular location is the centromere. It is found in the kinetochore. It localises to the nucleus. The protein localises to the nuclear pore complex. The protein resides in the lysosome membrane. With respect to regulation, the GATOR2 complex is negatively regulated by the upstream amino acid sensors CASTOR1 and SESN2, which sequester the GATOR2 complex in absence of amino acids. In the presence of abundant amino acids, GATOR2 is released from CASTOR1 and SESN2 and activated. Functionally, component of the Nup107-160 subcomplex of the nuclear pore complex (NPC). The Nup107-160 subcomplex is required for the assembly of a functional NPC. The Nup107-160 subcomplex is also required for normal kinetochore microtubule attachment, mitotic progression and chromosome segregation. This subunit plays a role in recruitment of the Nup107-160 subcomplex to the kinetochore. In terms of biological role, as a component of the GATOR2 complex, functions as an activator of the amino acid-sensing branch of the mTORC1 signaling pathway. The GATOR2 complex indirectly activates mTORC1 through the inhibition of the GATOR1 subcomplex. GATOR2 probably acts as an E3 ubiquitin-protein ligase toward GATOR1. In the presence of abundant amino acids, the GATOR2 complex mediates ubiquitination of the NPRL2 core component of the GATOR1 complex, leading to GATOR1 inactivation. In the absence of amino acids, GATOR2 is inhibited, activating the GATOR1 complex. The sequence is that of Nucleoporin SEH1-A (seh1l-a) from Xenopus laevis (African clawed frog).